A 471-amino-acid polypeptide reads, in one-letter code: Isochorismate synthase MenF (471 aa).

Lys226 acts as the Proton acceptor in catalysis. The active-site Proton donor is Glu275. Mg(2+) contacts are provided by Glu319 and Glu454.

Belongs to the isochorismate synthase family. Mg(2+) is required as a cofactor.

It carries out the reaction chorismate = isochorismate. It functions in the pathway quinol/quinone metabolism; 1,4-dihydroxy-2-naphthoate biosynthesis; 1,4-dihydroxy-2-naphthoate from chorismate: step 1/7. The protein operates within quinol/quinone metabolism; menaquinone biosynthesis. Catalyzes the conversion of chorismate to isochorismate. The protein is Isochorismate synthase MenF of Bacillus subtilis (strain 168).